Reading from the N-terminus, the 801-residue chain is Quinoprotein glucose dehydrogenase A (801 aa).

The N-terminal stretch at 1–33 (MNQPTSRSGLTTFTVIIIGLLALFLLIGGIWLA) is a signal peptide. Helical transmembrane passes span 39 to 55 (IYYIIAGVLLLIVAWQL), 59 to 79 (ASTALWFYAALMLGTIIWSVW), 94 to 108 (ILGILGLWLLVPAVT), and 119 to 138 (VALSSTLAIAIVLMVYSIFN). Residue aspartate 471 is the Proton acceptor of the active site.

Belongs to the bacterial PQQ dehydrogenase family. As to quaternary structure, monomer. Requires pyrroloquinoline quinone as cofactor.

The protein resides in the cell inner membrane. It carries out the reaction D-glucose + A = D-glucono-1,5-lactone + AH2. In terms of biological role, catalyzes an exceptionally high rate of oxidation of a wide range of aldose sugars, including D-glucose, galactose, arabinose and xylose, and also the disaccharides lactose, cellobiose and maltose. The sequence is that of Quinoprotein glucose dehydrogenase A (gdhA) from Acinetobacter calcoaceticus.